Here is a 263-residue protein sequence, read N- to C-terminus: Trans-2-decenoyl-[acyl-carrier-protein] isomerase (263 aa).

This sequence belongs to the enoyl-CoA hydratase/isomerase family. In terms of assembly, homotetramer.

It carries out the reaction (2E)-decenoyl-[ACP] = (3Z)-decenoyl-[ACP]. It participates in lipid metabolism; fatty acid biosynthesis. In terms of biological role, catalyzes the isomerization of trans-2-decenoyl-ACP to cis-3-decenoyl-ACP. Required for survival at low pH. The polypeptide is Trans-2-decenoyl-[acyl-carrier-protein] isomerase (fabM) (Streptococcus mutans serotype c (strain ATCC 700610 / UA159)).